Here is a 152-residue protein sequence, read N- to C-terminus: MFGISFSELLLVGLVALLVLGPERLPGAARTAGLWVGRLKRSFNAIKQEVEREIGADEIRRQLHNEHILSLEQEARKILAPTQQQPTPVEPVAEQTIHAPGAATVAEAPPASEVPAPLPSTPAPAPTAEPAAPVATPATTAPHDSTLPPRAP.

A helical membrane pass occupies residues 1 to 21 (MFGISFSELLLVGLVALLVLG). A compositionally biased stretch (low complexity) spans 98 to 115 (HAPGAATVAEAPPASEVP). The disordered stretch occupies residues 98–152 (HAPGAATVAEAPPASEVPAPLPSTPAPAPTAEPAAPVATPATTAPHDSTLPPRAP). Residues 116–127 (APLPSTPAPAPT) show a composition bias toward pro residues. The segment covering 128 to 142 (AEPAAPVATPATTAP) has biased composition (low complexity).

The protein belongs to the TatB family. As to quaternary structure, the Tat system comprises two distinct complexes: a TatABC complex, containing multiple copies of TatA, TatB and TatC subunits, and a separate TatA complex, containing only TatA subunits. Substrates initially bind to the TatABC complex, which probably triggers association of the separate TatA complex to form the active translocon.

It is found in the cell inner membrane. Functionally, part of the twin-arginine translocation (Tat) system that transports large folded proteins containing a characteristic twin-arginine motif in their signal peptide across membranes. Together with TatC, TatB is part of a receptor directly interacting with Tat signal peptides. TatB may form an oligomeric binding site that transiently accommodates folded Tat precursor proteins before their translocation. The sequence is that of Sec-independent protein translocase protein TatB from Pseudomonas fluorescens (strain ATCC BAA-477 / NRRL B-23932 / Pf-5).